Here is a 314-residue protein sequence, read N- to C-terminus: Ribosomal protein uL3 glutamine methyltransferase (314 aa).

Belongs to the protein N5-glutamine methyltransferase family. PrmB subfamily.

It carries out the reaction L-glutaminyl-[ribosomal protein uL3] + S-adenosyl-L-methionine = N(5)-methyl-L-glutaminyl-[ribosomal protein uL3] + S-adenosyl-L-homocysteine + H(+). Its function is as follows. Methylates large ribosomal subunit protein uL3 on a specific glutamine residue. The protein is Ribosomal protein uL3 glutamine methyltransferase of Haemophilus influenzae (strain ATCC 51907 / DSM 11121 / KW20 / Rd).